Consider the following 711-residue polypeptide: Origin recognition complex subunit 3 (711 aa).

S23 and S516 each carry phosphoserine.

The protein belongs to the ORC3 family. Component of ORC, a complex composed of at least 6 subunits: ORC1, ORC2, ORC3, ORC4, ORC5 and ORC6. ORC is regulated in a cell-cycle dependent manner. It is sequentially assembled at the exit from anaphase of mitosis and disassembled as cells enter S phase. Multi-mono-ubiquitinated by OBI1; ubiquitination is important for efficient DNA replication origin site activation. Ubiquitination levels are low in mitotic and early G1-phAse cells and are induced in late G1-/early S-phase, peaking in S-phase and decrease toward the end of the cell cycle.

It is found in the nucleus. Its subcellular location is the chromosome. Component of the origin recognition complex (ORC) that binds origins of replication. DNA-binding is ATP-dependent. The specific DNA sequences that define origins of replication have not been identified yet. ORC is required to assemble the pre-replication complex necessary to initiate DNA replication. Binds histone H3 and H4 trimethylation marks H3K9me3, H3K27me3 and H4K20me3. This chain is Origin recognition complex subunit 3 (ORC3), found in Homo sapiens (Human).